The following is a 217-amino-acid chain: Large ribosomal subunit protein uL4c (217 aa).

Positions 51 to 85 (HRNRNAHTQTRGEVSGGGRKPWKQKGTGRARAGSN) are disordered.

It belongs to the universal ribosomal protein uL4 family. In terms of assembly, part of the 50S ribosomal subunit.

It localises to the plastid. It is found in the chloroplast. Functionally, probably binds the 23S rRNA. The polypeptide is Large ribosomal subunit protein uL4c (rpl4) (Gracilaria tenuistipitata var. liui (Red alga)).